The sequence spans 728 residues: Catalase-peroxidase 1 (728 aa).

The tryptophyl-tyrosyl-methioninium (Trp-Tyr) (with M-244) cross-link spans 91–218; sequence WHSAGTYRTA…LAAVQMGLIY (128 aa). His-92 acts as the Proton acceptor in catalysis. Positions 218–244 form a cross-link, tryptophyl-tyrosyl-methioninium (Tyr-Met) (with W-91); sequence YVNPEGPDGNPDPVAAARDIRDTFARM. His-259 is a binding site for heme b.

Belongs to the peroxidase family. Peroxidase/catalase subfamily. In terms of assembly, homodimer or homotetramer. Requires heme b as cofactor. Formation of the three residue Trp-Tyr-Met cross-link is important for the catalase, but not the peroxidase activity of the enzyme.

The enzyme catalyses H2O2 + AH2 = A + 2 H2O. The catalysed reaction is 2 H2O2 = O2 + 2 H2O. Its function is as follows. Bifunctional enzyme with both catalase and broad-spectrum peroxidase activity. The polypeptide is Catalase-peroxidase 1 (Burkholderia ambifaria (strain MC40-6)).